A 236-amino-acid chain; its full sequence is EEF1A lysine methyltransferase 2 (236 aa).

Over residues 1-11 the composition is skewed to gly residues; that stretch reads MSSGADGGGGA. Residues 1 to 31 form a disordered region; it reads MSSGADGGGGAAVAARSDKGSPGEDGFVPSA. Position 2 is an N-acetylserine (serine 2). Phosphoserine is present on serine 21.

The protein belongs to the class I-like SAM-binding methyltransferase superfamily. EFM4 family.

The protein localises to the cytoplasm. It localises to the nucleus. It carries out the reaction L-lysyl-[protein] + 3 S-adenosyl-L-methionine = N(6),N(6),N(6)-trimethyl-L-lysyl-[protein] + 3 S-adenosyl-L-homocysteine + 3 H(+). Protein-lysine methyltransferase that selectively catalyzes the trimethylation of EEF1A at 'Lys-318'. In Homo sapiens (Human), this protein is EEF1A lysine methyltransferase 2.